A 719-amino-acid polypeptide reads, in one-letter code: Solute carrier organic anion transporter family member 6A1 (719 aa).

A disordered region spans residues 1-46 (MFVGVARHSGSQDEVSRGVEPLEAARAQPAKDRRAKGTPKSSKPGK). The Cytoplasmic segment spans residues 1-106 (MFVGVARHSG…TCCECCNNIR (106 aa)). The segment covering 33–46 (RRAKGTPKSSKPGK) has biased composition (basic residues). Residues 107–126 (CFMIFYCILLICQGVVFGLI) traverse the membrane as a helical segment. Topologically, residues 127–145 (DVSIGDFQKEYQLKTIEKL) are extracellular. A helical membrane pass occupies residues 146–166 (ALEKSYDISSGLVAIFIAFYG). Residues 167–171 (DRKKV) are Cytoplasmic-facing. Residues 172–196 (IWFVASSFLIGLGSLLCAFPSINEE) form a helical membrane-spanning segment. Topologically, residues 197–223 (NKQSKVGIEDICEEIKVVSGCQSSGIS) are extracellular. The helical transmembrane segment at 224 to 254 (FQSKYLSFFILGQTVQGIAGMPLYILGITFI) threads the bilayer. Topologically, residues 255-274 (DENVATHSAGIYLGIAECTS) are cytoplasmic. A helical membrane pass occupies residues 275 to 295 (MIGYALGYVLGAPLVKVPENT). Residues 296–311 (TSATNTTVNNGSPEWL) are Extracellular-facing. A glycan (N-linked (GlcNAc...) asparagine) is linked at N300. A helical transmembrane segment spans residues 312 to 336 (WTWWINFLFAAVVAWCTLIPLSCFP). Over 337–378 (NNMPGSTRIKARKRKQLHFFDSRLKDLKLGTNIKDLCAALWI) the chain is Cytoplasmic. The helical transmembrane segment at 379 to 400 (LMKNPVLICLALSKATEYLVII) threads the bilayer. Over 401–420 (GASEFLPIYLENQFILTPTV) the chain is Extracellular. Residues 421–444 (ATTLAGLVLIPGGALGQLLGGVIV) form a helical membrane-spanning segment. Residues 445–448 (STLE) lie on the Cytoplasmic side of the membrane. The helical transmembrane segment at 449 to 472 (MSCKALMRFIMVTSVISLILLVFI) threads the bilayer. Residues 473–581 (IFVRCNPVQF…DAKCYKLPLF (109 aa)) lie on the Extracellular side of the membrane. Positions 496-551 (GNLTAPCNEKCRCSSSIYSSICGRDDIEYFSPCFAGCTYSKAQNQKKMYYNCSCIK) constitute a Kazal-like domain. Residue N497 is glycosylated (N-linked (GlcNAc...) asparagine). 3 disulfide bridges follow: C502/C532, C508/C528, and C517/C549. N-linked (GlcNAc...) asparagine glycosylation occurs at N546. The chain crosses the membrane as a helical span at residues 582-604 (IAFIFSTLIFSGFSGVPIVLAMT). Residues 605-613 (RVVPDKLRS) are Cytoplasmic-facing. The chain crosses the membrane as a helical span at residues 614–639 (LALGVSYVILRIFGTIPGPSIFKMSG). Topologically, residues 640-673 (ETSCILRDVNKCGHTGRCWIYNKTKMAFLLVGIC) are extracellular. Residue N661 is glycosylated (N-linked (GlcNAc...) asparagine). The chain crosses the membrane as a helical span at residues 674 to 691 (FLCKLCTIIFTTIAFFIY). Residues 692 to 719 (KRRLNENTDFPDVTVKNPKVKKKEETDL) lie on the Cytoplasmic side of the membrane.

Belongs to the organo anion transporter (TC 2.A.60) family. In terms of tissue distribution, strongly expressed in testis. Weakly expressed in spleen, brain, fetal brain and placenta. Detected in lung tumors.

It localises to the cell membrane. The protein is Solute carrier organic anion transporter family member 6A1 (SLCO6A1) of Homo sapiens (Human).